The chain runs to 355 residues: Peptide chain release factor 1 (355 aa).

Glutamine 233 carries the N5-methylglutamine modification.

It belongs to the prokaryotic/mitochondrial release factor family. Post-translationally, methylated by PrmC. Methylation increases the termination efficiency of RF1.

It is found in the cytoplasm. In terms of biological role, peptide chain release factor 1 directs the termination of translation in response to the peptide chain termination codons UAG and UAA. This chain is Peptide chain release factor 1, found in Bacillus anthracis.